We begin with the raw amino-acid sequence, 262 residues long: Putative glutamine--fructose-6-phosphate aminotransferase [isomerizing] (262 aa).

The active-site Nucleophile; for GATase activity is the Cys-2. The Glutamine amidotransferase type-2 domain maps to 2–262; it reads CGIFGYCNFL…RKSPPFVHNT (261 aa).

It carries out the reaction D-fructose 6-phosphate + L-glutamine = D-glucosamine 6-phosphate + L-glutamate. It participates in nucleotide-sugar biosynthesis; UDP-N-acetyl-alpha-D-glucosamine biosynthesis; alpha-D-glucosamine 6-phosphate from D-fructose 6-phosphate: step 1/1. Involved in amino sugar synthesis (formation of chitin, supplies the amino sugars of asparagine-linked oligosaccharides of glycoproteins). The protein is Putative glutamine--fructose-6-phosphate aminotransferase [isomerizing] of Saccharomyces cerevisiae (strain ATCC 204508 / S288c) (Baker's yeast).